Reading from the N-terminus, the 1373-residue chain is DNA-directed RNA polymerase subunit beta (1373 aa).

This sequence belongs to the RNA polymerase beta chain family. As to quaternary structure, the RNAP catalytic core consists of 2 alpha, 1 beta, 1 beta' and 1 omega subunit. When a sigma factor is associated with the core the holoenzyme is formed, which can initiate transcription.

It catalyses the reaction RNA(n) + a ribonucleoside 5'-triphosphate = RNA(n+1) + diphosphate. DNA-dependent RNA polymerase catalyzes the transcription of DNA into RNA using the four ribonucleoside triphosphates as substrates. The polypeptide is DNA-directed RNA polymerase subunit beta (Rickettsia massiliae).